A 447-amino-acid polypeptide reads, in one-letter code: Tubulin beta chain (447 aa).

Gln11, Glu69, Ser138, Gly142, Thr143, Gly144, Asn204, and Asn226 together coordinate GTP. Residue Glu69 coordinates Mg(2+). The segment at 427-447 is disordered; that stretch reads EAHMDDEEAEEAYEDEAPPEE. Acidic residues predominate over residues 430–447; it reads MDDEEAEEAYEDEAPPEE.

It belongs to the tubulin family. In terms of assembly, dimer of alpha and beta chains. A typical microtubule is a hollow water-filled tube with an outer diameter of 25 nm and an inner diameter of 15 nM. Alpha-beta heterodimers associate head-to-tail to form protofilaments running lengthwise along the microtubule wall with the beta-tubulin subunit facing the microtubule plus end conferring a structural polarity. Microtubules usually have 13 protofilaments but different protofilament numbers can be found in some organisms and specialized cells. Mg(2+) is required as a cofactor.

It is found in the cytoplasm. It localises to the cytoskeleton. Its function is as follows. Tubulin is the major constituent of microtubules, a cylinder consisting of laterally associated linear protofilaments composed of alpha- and beta-tubulin heterodimers. Microtubules grow by the addition of GTP-tubulin dimers to the microtubule end, where a stabilizing cap forms. Below the cap, tubulin dimers are in GDP-bound state, owing to GTPase activity of alpha-tubulin. The chain is Tubulin beta chain (TBB1) from Uromyces fabae (Rust fungus).